A 377-amino-acid chain; its full sequence is Molybdenum import ATP-binding protein ModC (377 aa).

The 238-residue stretch at 17–254 (ITGDEAIRAR…LDLPFAHDED (238 aa)) folds into the ABC transporter domain. ATP is bound at residue 52–59 (GHSGSGKT). The Mop domain maps to 313–377 (DSSILNVLPA…AQVKGVALLR (65 aa)).

Belongs to the ABC transporter superfamily. Molybdate importer (TC 3.A.1.8) family. The complex is composed of two ATP-binding proteins (ModC), two transmembrane proteins (ModB) and a solute-binding protein (ModA).

The protein localises to the cell inner membrane. The catalysed reaction is molybdate(out) + ATP + H2O = molybdate(in) + ADP + phosphate + H(+). In terms of biological role, part of the ABC transporter complex ModABC involved in molybdenum import. Responsible for energy coupling to the transport system. This is Molybdenum import ATP-binding protein ModC from Aromatoleum aromaticum (strain DSM 19018 / LMG 30748 / EbN1) (Azoarcus sp. (strain EbN1)).